The chain runs to 362 residues: Homoserine O-acetyltransferase FUB5 (362 aa).

Positions 12-335 (NVMIICHALS…VSDDGHDAFL (324 aa)) constitute an AB hydrolase-1 domain. The Nucleophile role is filled by S110. A disordered region spans residues 195 to 232 (RFGRDTGNKKKTQQQDSKTIPNNGTPIHSQGGADETPV). The span at 208 to 222 (QQDSKTIPNNGTPIH) shows a compositional bias: polar residues. Residues D302 and H331 contribute to the active site.

This sequence belongs to the AB hydrolase superfamily. MetX family.

The enzyme catalyses L-homoserine + acetyl-CoA = O-acetyl-L-homoserine + CoA. Its pathway is mycotoxin biosynthesis. Functionally, homoserine O-acetyltransferase; part of the gene cluster that mediates the biosynthesis of fusaric acid, a mycotoxin with low to moderate toxicity to animals and humans, but with high phytotoxic properties. L-aspartate is suggested as fusaric acid amino acid precursor that is activated and further processed to O-acetyl-L-homoserine by cluster enzymes aspartate kinase FUB3 and homoserine O-acetyltransferase FUB5, as well as enzymes of the primary metabolism. The polyketide synthase (PKS) FUB1 generates the triketide trans-2-hexenal which is presumptively released by the hydrolase FUB4 and linked to the NRPS-bound amino acid precursor by NAD(P)-dependent dehydrogenase FUB6. FUB1, FUB4, and the non-canonical NRPS Fub8 may form an enzyme complex. Further processing of the NRPS-bound intermediate might be carried out by FUB6 and the O-acetylhomoserine FUB7, enabling a spontaneous electrocyclization to close the carbon backbone of fusaric acid. Dihydrofusaric acid is likely to be released via reduction by the thioester reductase (TR) domain of FUB8 whereupon the final oxidation to fusaric acid may (also) be performed by the FMN-dependent dehydrogenase FUB9. The protein is Homoserine O-acetyltransferase FUB5 of Fusarium oxysporum f. sp. lycopersici (strain 4287 / CBS 123668 / FGSC 9935 / NRRL 34936) (Fusarium vascular wilt of tomato).